Here is a 219-residue protein sequence, read N- to C-terminus: Hemolysin-3 (219 aa).

7 helical membrane passes run 19–39, 49–69, 83–103, 112–132, 138–158, 165–185, and 194–214; these read AITH…LIIH, VVAF…STLL, ILDH…FLLI, TLLA…IFFV, ASTL…KPLY, GFSL…FFLW, and IWHL…LFYV.

Belongs to the UPF0073 (Hly-III) family.

Its subcellular location is the cell membrane. In terms of biological role, might be virulent against a mammalian host; when expressed in E.coli, the soluble extract has hemolytic activity on human erythrocytes. The activity is not inhibited by cholesterol or activated by 2-mercaptoethanol. Might be pore-forming protein. Its in vivo role in virulence is untested, nor has it been shown to be secreted by B.cereus. The sequence is that of Hemolysin-3 from Bacillus cereus.